Consider the following 171-residue polypeptide: S-ribosylhomocysteine lyase (171 aa).

Residues H54, H58, and C128 each contribute to the Fe cation site.

This sequence belongs to the LuxS family. Homodimer. It depends on Fe cation as a cofactor.

The catalysed reaction is S-(5-deoxy-D-ribos-5-yl)-L-homocysteine = (S)-4,5-dihydroxypentane-2,3-dione + L-homocysteine. Involved in the synthesis of autoinducer 2 (AI-2) which is secreted by bacteria and is used to communicate both the cell density and the metabolic potential of the environment. The regulation of gene expression in response to changes in cell density is called quorum sensing. Catalyzes the transformation of S-ribosylhomocysteine (RHC) to homocysteine (HC) and 4,5-dihydroxy-2,3-pentadione (DPD). The sequence is that of S-ribosylhomocysteine lyase from Escherichia coli O157:H7.